The chain runs to 348 residues: Protein RecA (348 aa).

65–72 is an ATP binding site; the sequence is GPESSGKT.

The protein belongs to the RecA family.

It is found in the cytoplasm. In terms of biological role, can catalyze the hydrolysis of ATP in the presence of single-stranded DNA, the ATP-dependent uptake of single-stranded DNA by duplex DNA, and the ATP-dependent hybridization of homologous single-stranded DNAs. It interacts with LexA causing its activation and leading to its autocatalytic cleavage. This is Protein RecA from Enterococcus faecalis (strain ATCC 700802 / V583).